The sequence spans 733 residues: LMBR1 domain-containing protein 2 homolog A (733 aa).

The next 5 membrane-spanning stretches (helical) occupy residues 1-21 (MIVI…KILH), 33-53 (VYIS…LVPI), 125-145 (FYFG…SFVL), 163-183 (AYLY…LLAV), and 191-211 (MVGF…IILM). A coiled-coil region spans residues 232–266 (LKHLQFKAVELLNSKKKANEELIATMKVIRRIQEK). 4 helical membrane-spanning segments follow: residues 386 to 406 (AAIV…ALAF), 423 to 443 (VSNI…ALTC), 468 to 488 (SIIF…YNFI), and 513 to 533 (VAPF…VIVC). 3 disordered regions span residues 581–641 (NNIK…TSSA), 649–668 (LKKS…PYEQ), and 674–696 (ESND…TYNA). The segment covering 596–619 (DSTSNNPKQIFKSGSTTISKQSPP) has biased composition (polar residues). 2 stretches are compositionally biased toward low complexity: residues 620-640 (NLNV…NTSS) and 654-664 (NNNNNNNNNNN). The segment covering 674–685 (ESNDFDDDDDIE) has biased composition (acidic residues).

Belongs to the LIMR family.

Its subcellular location is the membrane. The chain is LMBR1 domain-containing protein 2 homolog A from Dictyostelium discoideum (Social amoeba).